The following is a 279-amino-acid chain: Probable endonuclease 4 (279 aa).

Zn(2+)-binding residues include histidine 66, histidine 106, glutamate 142, aspartate 176, histidine 179, histidine 213, aspartate 226, histidine 228, and glutamate 258.

The protein belongs to the AP endonuclease 2 family. Zn(2+) serves as cofactor.

It carries out the reaction Endonucleolytic cleavage to 5'-phosphooligonucleotide end-products.. Its function is as follows. Endonuclease IV plays a role in DNA repair. It cleaves phosphodiester bonds at apurinic or apyrimidinic (AP) sites, generating a 3'-hydroxyl group and a 5'-terminal sugar phosphate. This is Probable endonuclease 4 from Photobacterium profundum (strain SS9).